The primary structure comprises 89 residues: Small ribosomal subunit protein uS15 (89 aa).

It belongs to the universal ribosomal protein uS15 family. As to quaternary structure, part of the 30S ribosomal subunit. Forms a bridge to the 50S subunit in the 70S ribosome, contacting the 23S rRNA.

Functionally, one of the primary rRNA binding proteins, it binds directly to 16S rRNA where it helps nucleate assembly of the platform of the 30S subunit by binding and bridging several RNA helices of the 16S rRNA. In terms of biological role, forms an intersubunit bridge (bridge B4) with the 23S rRNA of the 50S subunit in the ribosome. The protein is Small ribosomal subunit protein uS15 of Caulobacter sp. (strain K31).